The primary structure comprises 267 residues: Hydroxynaphthalene reductase-like protein Arp2 (267 aa).

Residues isoleucine 25, asparagine 45, aspartate 71, and asparagine 98 each coordinate NADP(+). Residues serine 147 and serine 148 each act as proton donor in the active site. Tyrosine 162, lysine 166, valine 195, and threonine 197 together coordinate NADP(+). Tyrosine 162 functions as the Proton acceptor in the catalytic mechanism. Lysine 166 functions as the Lowers pKa of active site Tyr in the catalytic mechanism.

Belongs to the short-chain dehydrogenases/reductases (SDR) family.

Its function is as follows. Hydroxynaphthalene reductase-like protein; part of the Pks2 gene cluster that mediates the formation of infectious structures (appressoria), enabling these fungi to kill insects faster. The product of the Pks2 gene cluster is different from the one of Pks1 and has still not been identified. This is Hydroxynaphthalene reductase-like protein Arp2 from Metarhizium robertsii (strain ARSEF 23 / ATCC MYA-3075) (Metarhizium anisopliae (strain ARSEF 23)).